A 128-amino-acid chain; its full sequence is UPF0102 protein Rfer_3873 (128 aa).

Residues 1-15 are compositionally biased toward polar residues; the sequence is MAIPQIKTQVGTSKQ. The disordered stretch occupies residues 1 to 20; that stretch reads MAIPQIKTQVGTSKQAGDAA.

This sequence belongs to the UPF0102 family.

This chain is UPF0102 protein Rfer_3873, found in Albidiferax ferrireducens (strain ATCC BAA-621 / DSM 15236 / T118) (Rhodoferax ferrireducens).